A 318-amino-acid polypeptide reads, in one-letter code: UDP-N-acetylenolpyruvoylglucosamine reductase (318 aa).

An FAD-binding PCMH-type domain is found at 39-202 (VGGPADLLVR…TRVQLTLRPG (164 aa)). Residue Arg-182 is part of the active site. The span at 214–223 (DRDGRRRTQP) shows a compositional bias: basic and acidic residues. Residues 214–235 (DRDGRRRTQPLDRPTFGSTFTN) form a disordered region. Residue Ser-231 is the Proton donor of the active site. The active site involves Glu-301.

Belongs to the MurB family. It depends on FAD as a cofactor.

It localises to the cytoplasm. The catalysed reaction is UDP-N-acetyl-alpha-D-muramate + NADP(+) = UDP-N-acetyl-3-O-(1-carboxyvinyl)-alpha-D-glucosamine + NADPH + H(+). The protein operates within cell wall biogenesis; peptidoglycan biosynthesis. In terms of biological role, cell wall formation. This chain is UDP-N-acetylenolpyruvoylglucosamine reductase, found in Anaeromyxobacter sp. (strain Fw109-5).